We begin with the raw amino-acid sequence, 235 residues long: 7-carboxy-7-deazaguanine synthase (235 aa).

Substrate contacts are provided by residues 27–29 (LQG) and Arg-42. The Radical SAM core domain maps to 33–235 (FSGQPSVFVR…VQVHKILKIA (203 aa)). 3 residues coordinate [4Fe-4S] cluster: Cys-46, Cys-50, and Cys-53. Residue Thr-55 coordinates Mg(2+). Residue Thr-87 coordinates substrate. S-adenosyl-L-methionine contacts are provided by residues Gly-89 and 133-135 (SPK).

The protein belongs to the radical SAM superfamily. 7-carboxy-7-deazaguanine synthase family. Homodimer. Requires [4Fe-4S] cluster as cofactor. The cofactor is S-adenosyl-L-methionine. Mg(2+) is required as a cofactor.

The enzyme catalyses 6-carboxy-5,6,7,8-tetrahydropterin + H(+) = 7-carboxy-7-deazaguanine + NH4(+). It participates in purine metabolism; 7-cyano-7-deazaguanine biosynthesis. In terms of biological role, catalyzes the complex heterocyclic radical-mediated conversion of 6-carboxy-5,6,7,8-tetrahydropterin (CPH4) to 7-carboxy-7-deazaguanine (CDG), a step common to the biosynthetic pathways of all 7-deazapurine-containing compounds. The polypeptide is 7-carboxy-7-deazaguanine synthase (Rhodospirillum rubrum (strain ATCC 11170 / ATH 1.1.1 / DSM 467 / LMG 4362 / NCIMB 8255 / S1)).